The primary structure comprises 379 residues: Glutamate 5-kinase (379 aa).

Lys-8 is a binding site for ATP. Residues Ser-49, Asp-136, and Asn-148 each contribute to the substrate site. ATP contacts are provided by residues 168–169 (TD) and 211–217 (TGGMATK). The region spanning 276 to 354 (MGKIYLDAGA…ERIASLLGYM (79 aa)) is the PUA domain.

The protein belongs to the glutamate 5-kinase family.

It is found in the cytoplasm. It catalyses the reaction L-glutamate + ATP = L-glutamyl 5-phosphate + ADP. It functions in the pathway amino-acid biosynthesis; L-proline biosynthesis; L-glutamate 5-semialdehyde from L-glutamate: step 1/2. Functionally, catalyzes the transfer of a phosphate group to glutamate to form L-glutamate 5-phosphate. This chain is Glutamate 5-kinase, found in Microcystis aeruginosa (strain NIES-843 / IAM M-2473).